Here is a 143-residue protein sequence, read N- to C-terminus: 1,4-dihydroxy-2-naphthoyl-CoA hydrolase (143 aa).

The active site involves aspartate 14.

The protein belongs to the 4-hydroxybenzoyl-CoA thioesterase family. DHNA-CoA hydrolase subfamily.

The catalysed reaction is 1,4-dihydroxy-2-naphthoyl-CoA + H2O = 1,4-dihydroxy-2-naphthoate + CoA + H(+). Its pathway is cofactor biosynthesis; phylloquinone biosynthesis. It functions in the pathway quinol/quinone metabolism; 1,4-dihydroxy-2-naphthoate biosynthesis; 1,4-dihydroxy-2-naphthoate from chorismate: step 7/7. In terms of biological role, catalyzes the hydrolysis of 1,4-dihydroxy-2-naphthoyl-CoA (DHNA-CoA) to 1,4-dihydroxy-2-naphthoate (DHNA), a reaction involved in phylloquinone (vitamin K1) biosynthesis. The chain is 1,4-dihydroxy-2-naphthoyl-CoA hydrolase from Gloeothece citriformis (strain PCC 7424) (Cyanothece sp. (strain PCC 7424)).